The sequence spans 407 residues: Arginine biosynthesis bifunctional protein ArgJ (407 aa).

Residues Thr154, Lys180, Thr191, Glu278, Asn402, and Ser407 each coordinate substrate. Thr191 functions as the Nucleophile in the catalytic mechanism.

This sequence belongs to the ArgJ family. In terms of assembly, heterotetramer of two alpha and two beta chains.

It localises to the cytoplasm. The enzyme catalyses N(2)-acetyl-L-ornithine + L-glutamate = N-acetyl-L-glutamate + L-ornithine. It carries out the reaction L-glutamate + acetyl-CoA = N-acetyl-L-glutamate + CoA + H(+). It functions in the pathway amino-acid biosynthesis; L-arginine biosynthesis; L-ornithine and N-acetyl-L-glutamate from L-glutamate and N(2)-acetyl-L-ornithine (cyclic): step 1/1. Its pathway is amino-acid biosynthesis; L-arginine biosynthesis; N(2)-acetyl-L-ornithine from L-glutamate: step 1/4. Functionally, catalyzes two activities which are involved in the cyclic version of arginine biosynthesis: the synthesis of N-acetylglutamate from glutamate and acetyl-CoA as the acetyl donor, and of ornithine by transacetylation between N(2)-acetylornithine and glutamate. The protein is Arginine biosynthesis bifunctional protein ArgJ of Psychrobacter arcticus (strain DSM 17307 / VKM B-2377 / 273-4).